The sequence spans 130 residues: T-cell receptor alpha chain V region PHDS58 (130 aa).

The signal sequence occupies residues 1-20; that stretch reads MLLALLPVLGIHFVLRDAQA. A v segment region spans residues 21–114; sequence QSVTQPDARV…SAVYFCAVSG (94 aa). The N-linked (GlcNAc...) asparagine glycan is linked to asparagine 90. Residues 115-130 form a j segment region; it reads FASALTFGSGTKVIVL.

The protein is T-cell receptor alpha chain V region PHDS58 of Mus musculus (Mouse).